Here is a 374-residue protein sequence, read N- to C-terminus: AA14 family lytic polysaccharide monooxygenase B (374 aa).

The N-terminal stretch at methionine 1–glycine 18 is a signal peptide. 4 N-linked (GlcNAc...) asparagine glycosylation sites follow: asparagine 31, asparagine 49, asparagine 94, and asparagine 151. Disulfide bonds link cysteine 85–cysteine 108, cysteine 127–cysteine 154, cysteine 171–cysteine 176, cysteine 178–cysteine 200, and cysteine 220–cysteine 236. N-linked (GlcNAc...) asparagine glycans are attached at residues asparagine 235 and asparagine 315. A disordered region spans residues isoleucine 306–phenylalanine 374. A compositionally biased stretch (low complexity) spans proline 313–alanine 344.

Belongs to the polysaccharide monooxygenase AA14 family. Cu(2+) serves as cofactor.

It localises to the secreted. In terms of biological role, lytic polysaccharide monooxygenase (LPMO) that oxidatively cleaves xylan with both C1 and C4 regioselectivity and that specifically targets the protective shield made by heteroxylans that cover cellulose microfibrils in wood. Catalysis by LPMOs requires the reduction of the active-site copper from Cu(II) to Cu(I) by a reducing agent and H(2)O(2) or O(2) as a cosubstrate. Cleavage occurs only when xylans are bound to cellulose and not when they are in solution. Increases the efficiency of wood saccharification through oxidative cleavage of highly refractory xylan-coated cellulose fibers via synergistic relationship with xylan-active enzymes, xylobiohydrolases and cellobiohydrolases. The sequence is that of AA14 family lytic polysaccharide monooxygenase B from Pycnoporus cinnabarinus (Cinnabar-red polypore).